We begin with the raw amino-acid sequence, 70 residues long: MKQGIHPNYVEITATCSCGNVIKTHSTVGKDLNLDVCGNCHPFYTGKQRVVDTGGRVERFNKRFSIPSTK.

The Zn(2+) site is built by cysteine 16, cysteine 18, cysteine 37, and cysteine 40.

It belongs to the bacterial ribosomal protein bL31 family. Type A subfamily. As to quaternary structure, part of the 50S ribosomal subunit. It depends on Zn(2+) as a cofactor.

In terms of biological role, binds the 23S rRNA. The protein is Large ribosomal subunit protein bL31 of Glaesserella parasuis serovar 5 (strain SH0165) (Haemophilus parasuis).